The following is a 213-amino-acid chain: Large ribosomal subunit protein uL3 (213 aa).

It belongs to the universal ribosomal protein uL3 family. In terms of assembly, part of the 50S ribosomal subunit. Forms a cluster with proteins L14 and L19.

Its function is as follows. One of the primary rRNA binding proteins, it binds directly near the 3'-end of the 23S rRNA, where it nucleates assembly of the 50S subunit. This Kosmotoga olearia (strain ATCC BAA-1733 / DSM 21960 / TBF 19.5.1) protein is Large ribosomal subunit protein uL3.